The following is a 200-amino-acid chain: Integrin beta-1-binding protein 1 (200 aa).

Residues 1–10 (MFRKGKKRHS) are compositionally biased toward basic residues. Residues 1–56 (MFRKGKKRHSSSSSQSSEISTKSKSVDSSLGGLSRSSTVASLDTDSTKSSGQSNNN) form a disordered region. The short motif at 6-7 (KK) is the Nuclear localization signal element. Low complexity predominate over residues 11–29 (SSSSQSSEISTKSKSVDSS). A compositionally biased stretch (polar residues) spans 34–56 (SRSSTVASLDTDSTKSSGQSNNN). T38 carries the post-translational modification Phosphothreonine; by CaMK2. Position 41 is a phosphoserine (S41). The region spanning 58 to 200 (DTCAEFRIKY…FDSVLTSEKP (143 aa)) is the PID domain. Positions 136 to 139 (YLII) are interaction with KRIT1. The interval 139 to 141 (IRM) is interaction with ITGB1.

Interacts (via N-terminus and PTB domain) with ROCK1. Found in a complex, at least composed of ITGB1BP1, KRIT1 and RAP1A. Interacts (via C-terminal region) with ITGB1 (via C-terminal cytoplasmic tail); the interaction prevents talin TLN1 binding to ITGB1 and KRIT1 and ITGB1 compete for the same binding site. Interacts with KRIT1 (via N-terminal NPXY motif); the interaction induces the opening conformation of KRIT1 and KRIT1 and ITGB1 compete for the same binding site. Isoform 2 does not interact with ITGB1. Interacts with CDC42 (GTP- or GDP-bound form); the interaction is increased with the CDC42-membrane bound forms and prevents both CDC42 activation and cell spreading. Interacts (via C-terminal domain region) with NME2. Interacts with FERMT2 and RAC1. Phosphorylation at Thr-38 seems to enhance integrin alpha5beta1-mediated cell adhesion. The degree of phosphorylation is regulated by integrin-dependent cell-matrix interaction.

It is found in the nucleus. Its subcellular location is the cytoplasm. The protein localises to the cytoskeleton. The protein resides in the cell membrane. It localises to the cell projection. It is found in the lamellipodium. Its subcellular location is the ruffle. Key regulator of the integrin-mediated cell-matrix interaction signaling by binding to the ITGB1 cytoplasmic tail and preventing the activation of integrin alpha-5/beta-1 (heterodimer of ITGA5 and ITGB1) by talin or FERMT1. Plays a role in cell proliferation, differentiation, spreading, adhesion and migration in the context of mineralization and bone development and angiogenesis. Stimulates cellular proliferation in a fibronectin-dependent manner. Involved in the regulation of beta-1 integrin-containing focal adhesion (FA) site dynamics by controlling its assembly rate during cell adhesion; inhibits beta-1 integrin clustering within FA by directly competing with talin TLN1, and hence stimulates osteoblast spreading and migration in a fibronectin- and/or collagen-dependent manner. Acts as a guanine nucleotide dissociation inhibitor (GDI) by regulating Rho family GTPases during integrin-mediated cell matrix adhesion; reduces the level of active GTP-bound form of both CDC42 and RAC1 GTPases upon cell adhesion to fibronectin. Stimulates the release of active CDC42 from the membranes to maintain it in an inactive cytoplasmic pool. Participates in the translocation of the Rho-associated protein kinase ROCK1 to membrane ruffles at cell leading edges of the cell membrane, leading to an increase of myoblast cell migration on laminin. Plays a role in bone mineralization at a late stage of osteoblast differentiation; modulates the dynamic formation of focal adhesions into fibrillar adhesions, which are adhesive structures responsible for fibronectin deposition and fibrillogenesis. Plays a role in blood vessel development; acts as a negative regulator of angiogenesis by attenuating endothelial cell proliferation and migration, lumen formation and sprouting angiogenesis by promoting AKT phosphorylation and inhibiting ERK1/2 phosphorylation through activation of the Notch signaling pathway. Promotes transcriptional activity of the MYC promoter. The sequence is that of Integrin beta-1-binding protein 1 (ITGB1BP1) from Bos taurus (Bovine).